We begin with the raw amino-acid sequence, 257 residues long: A-factor type gamma-butyrolactone 1'-reductase (1S-forming) (257 aa).

Tyr161 acts as the Proton acceptor in catalysis.

This sequence belongs to the short-chain dehydrogenases/reductases (SDR) family. In terms of assembly, homodimer.

The enzyme catalyses a (3R,4R)-3-[(1S)-1-hydroxyalkyl]-4-(hydroxymethyl)oxolan-2-one + NADP(+) = a (3R,4R)-3-alkanoyl-4-(hydroxymethyl)oxolan-2-one + NADPH + H(+). In terms of biological role, involved in the biosynthesis of virginiae butanolide (VB), which regulates the production of antibiotic virginiamycin. Catalyzes the reduction of 6-dehydro-VB-A to VB-A, the last catalytic step in VB biosynthesis. In vitro, can use various synthetic A-factor-type analogs. The chain is A-factor type gamma-butyrolactone 1'-reductase (1S-forming) from Streptomyces virginiae (Streptomyces cinnamonensis).